The chain runs to 727 residues: Kinesin-like protein KIN-14G (727 aa).

3 disordered regions span residues 100–156, 172–194, and 336–357; these read QTAP…LHLR, HLSA…SCSR, and LAGG…GATR. A compositionally biased stretch (polar residues) spans 114–133; it reads VASSTAGRASRTKSASSTGR. Residues 381 to 710 form the Kinesin motor domain; sequence NIRVFCRVRP…LRFAARVNSC (330 aa). Position 461 to 468 (461 to 468) interacts with ATP; that stretch reads GQTGSGKT.

This sequence belongs to the TRAFAC class myosin-kinesin ATPase superfamily. Kinesin family. KIN-14 subfamily.

This Oryza sativa subsp. japonica (Rice) protein is Kinesin-like protein KIN-14G.